Reading from the N-terminus, the 1248-residue chain is Cullin-associated NEDD8-dissociated protein 1 (1248 aa).

HEAT repeat units lie at residues 44 to 82 (DESEKKVVRMVLKLLEDKNGEVQNLAVKCLGPLVNKVKE), 127 to 165 (PNVCQRITGKLSTAIEKEDVSVKLESLDILADLLSRFGE), 168 to 206 (VPFHSTILKALMPQLASSRQAVRKRTIVALSFLLIQANS), 365 to 403 (EDFYRSLSPALIARFKEREENVKSDIFHAYVALLKNTRL), 425 to 463 (IEQLPLIVKAIQPLMREKSMKTRQDCFLLLRELLNSLPG), 510 to 548 (HPHIPLLVPLVVTSVFDPFYKIATEALLVLQQLVKVIRP), 604 to 642 (QNELAVCLPIFMERLKNEVTRLSSVKALTLIAASSLRID), 644 to 682 (TPILHDVLPALGTFLRKNHRALKLHSLDLINKIVINYSS), 861 to 900 (DLSSIQVLPQTIIECFGATSEDVKAAASHALGAVSVGSLQ), 976 to 1014 (LVNPDELLPQLQQALRSESATMRTVVVSSVKFTISDQPQ), and 1054 to 1093 (PSLVRDLLPTLLPWLYSETKVKSELIREVEMGPFKHTVDD).

The protein belongs to the CAND family.

In terms of biological role, key assembly factor of SCF (SKP1-CUL1-F-box protein) E3 ubiquitin ligase complexes that promotes the exchange of the substrate-recognition F-box subunit in SCF complexes, thereby playing a key role in the cellular repertoire of SCF complexes. Acts as a F-box protein exchange factor. Probably plays a similar role in other cullin-RING E3 ubiquitin ligase complexes. In Drosophila melanogaster (Fruit fly), this protein is Cullin-associated NEDD8-dissociated protein 1 (Cand1).